The sequence spans 389 residues: PqqA peptide cyclase (389 aa).

The 216-residue stretch at 19–234 (VGLPLWLLAE…TNEYRARLEA (216 aa)) folds into the Radical SAM core domain. Residues Cys33, Cys37, and Cys40 each contribute to the [4Fe-4S] cluster site.

Belongs to the radical SAM superfamily. PqqE family. Interacts with PqqD. The interaction is necessary for activity of PqqE. It depends on [4Fe-4S] cluster as a cofactor.

The catalysed reaction is [PQQ precursor protein] + S-adenosyl-L-methionine = E-Y cross-linked-[PQQ precursor protein] + 5'-deoxyadenosine + L-methionine + H(+). The protein operates within cofactor biosynthesis; pyrroloquinoline quinone biosynthesis. In terms of biological role, catalyzes the cross-linking of a glutamate residue and a tyrosine residue in the PqqA protein as part of the biosynthesis of pyrroloquinoline quinone (PQQ). The chain is PqqA peptide cyclase from Pseudomonas syringae pv. syringae (strain B728a).